Consider the following 689-residue polypeptide: DNA ligase (689 aa).

Residues 40–44 (DAEYD), 89–90 (SL), and glutamate 121 each bind NAD(+). The active-site N6-AMP-lysine intermediate is the lysine 123. NAD(+) is bound by residues arginine 144, glutamate 179, lysine 295, and lysine 319. Zn(2+)-binding residues include cysteine 413, cysteine 416, cysteine 431, and cysteine 437. The region spanning 610–689 (KEHSSLTGKI…EEWLTIVNNV (80 aa)) is the BRCT domain.

This sequence belongs to the NAD-dependent DNA ligase family. LigA subfamily. The cofactor is Mg(2+). Mn(2+) is required as a cofactor.

It catalyses the reaction NAD(+) + (deoxyribonucleotide)n-3'-hydroxyl + 5'-phospho-(deoxyribonucleotide)m = (deoxyribonucleotide)n+m + AMP + beta-nicotinamide D-nucleotide.. In terms of biological role, DNA ligase that catalyzes the formation of phosphodiester linkages between 5'-phosphoryl and 3'-hydroxyl groups in double-stranded DNA using NAD as a coenzyme and as the energy source for the reaction. It is essential for DNA replication and repair of damaged DNA. This chain is DNA ligase, found in Rickettsia canadensis (strain McKiel).